Consider the following 561-residue polypeptide: MPESKYRQQTIRAPRGTVLTAKSWLTEAPLRMLMNNLDPDVAENPHELVVYGGIGRAARNWECYDAIVDALTRLEADETLLIQSGKPVGVFKTHDNAPRVLIANSNLAPHWATWEHFNELDAKGLAMYGQMTAGSWIYIGSQGIVQGTYETFVEAGCQHYNGTLAGRWVLTAGLGGMGGAQPLAATLAGACSLTIECQQSRIDFRLRTRYVDEQAATLDDALARITRYTREGKAVSVALCANAADILPELVNRGVRPDLVTDQTSAHDPLHGYLPSGWRWEEYQKNAQSDPHGTMQAAKRSMAAHVRAMLAFSKMGVPTFDYGNNIRQMAKEMGVENAFDFPGFVPAYIRPLFCRGIGPFRWVALSGDPQDIYKTDAKVKEIVAEDKHLHHWLDMARERIHFQGLPARICWVGLEWRQKLGLAFNEMVRCGEVSAPIVIGRDHLDSGSVASPNRETEAMRDGSDAVSDWPLLNALLNTASGATWVSLHHGGGVGMGFSQHAGMVIVCDGTDEAAARIRRVLHNDPATGVMRHADAGYDLAVECAVEQGLNLPMVAATQGKG.

Residues 52-53 (GG), Gln130, 176-178 (GMG), Glu196, Arg201, 242-243 (NA), 263-267 (QTSAH), 273-274 (YL), and Tyr322 each bind NAD(+). The active site involves Cys410. NAD(+) is bound at residue Gly492.

Belongs to the urocanase family. The cofactor is NAD(+).

The protein resides in the cytoplasm. It catalyses the reaction 4-imidazolone-5-propanoate = trans-urocanate + H2O. The protein operates within amino-acid degradation; L-histidine degradation into L-glutamate; N-formimidoyl-L-glutamate from L-histidine: step 2/3. Functionally, catalyzes the conversion of urocanate to 4-imidazolone-5-propionate. This Salmonella gallinarum (strain 287/91 / NCTC 13346) protein is Urocanate hydratase.